A 975-amino-acid polypeptide reads, in one-letter code: Protein HIRA (975 aa).

7 WD repeats span residues Arg-10–Asp-50, Asp-64–Glu-103, Gly-123–Val-162, Gly-165–Arg-204, Gly-214–Asp-256, Gly-259–Val-331, and Phe-335–Arg-374. Residues Lys-418 to Ser-433 are compositionally biased toward low complexity. Disordered stretches follow at residues Lys-418–Asn-510 and Asn-948–Ser-975. The span at Asp-435 to Asn-445 shows a compositional bias: polar residues. Over residues Lys-478–Ile-492 the composition is skewed to basic and acidic residues. Polar residues predominate over residues Pro-499 to Asn-510. Positions Ala-923 to Val-954 form a coiled coil.

Belongs to the WD repeat HIR1 family.

The protein resides in the nucleus. Histone chaperone involved in maintining knox genes silencing throughout leaf development. The protein is Protein HIRA of Oryza sativa subsp. japonica (Rice).